A 296-amino-acid chain; its full sequence is 33 kDa chaperonin (296 aa).

2 disulfide bridges follow: Cys-238–Cys-240 and Cys-271–Cys-274.

Belongs to the HSP33 family. Post-translationally, under oxidizing conditions two disulfide bonds are formed involving the reactive cysteines. Under reducing conditions zinc is bound to the reactive cysteines and the protein is inactive.

It is found in the cytoplasm. Its function is as follows. Redox regulated molecular chaperone. Protects both thermally unfolding and oxidatively damaged proteins from irreversible aggregation. Plays an important role in the bacterial defense system toward oxidative stress. In Clostridium botulinum (strain 657 / Type Ba4), this protein is 33 kDa chaperonin.